Reading from the N-terminus, the 238-residue chain is Ribonuclease PH (238 aa).

Phosphate contacts are provided by residues Arg86 and 124 to 126; that span reads GTR.

This sequence belongs to the RNase PH family. In terms of assembly, homohexameric ring arranged as a trimer of dimers.

The catalysed reaction is tRNA(n+1) + phosphate = tRNA(n) + a ribonucleoside 5'-diphosphate. In terms of biological role, phosphorolytic 3'-5' exoribonuclease that plays an important role in tRNA 3'-end maturation. Removes nucleotide residues following the 3'-CCA terminus of tRNAs; can also add nucleotides to the ends of RNA molecules by using nucleoside diphosphates as substrates, but this may not be physiologically important. Probably plays a role in initiation of 16S rRNA degradation (leading to ribosome degradation) during starvation. The polypeptide is Ribonuclease PH (Geotalea uraniireducens (strain Rf4) (Geobacter uraniireducens)).